The primary structure comprises 105 residues: Large ribosomal subunit protein uL24 (105 aa).

It belongs to the universal ribosomal protein uL24 family. As to quaternary structure, part of the 50S ribosomal subunit.

In terms of biological role, one of two assembly initiator proteins, it binds directly to the 5'-end of the 23S rRNA, where it nucleates assembly of the 50S subunit. Functionally, one of the proteins that surrounds the polypeptide exit tunnel on the outside of the subunit. The sequence is that of Large ribosomal subunit protein uL24 from Thioalkalivibrio sulfidiphilus (strain HL-EbGR7).